The primary structure comprises 259 residues: 3-deoxy-manno-octulosonate cytidylyltransferase (259 aa).

Belongs to the KdsB family.

The protein resides in the cytoplasm. The catalysed reaction is 3-deoxy-alpha-D-manno-oct-2-ulosonate + CTP = CMP-3-deoxy-beta-D-manno-octulosonate + diphosphate. It participates in nucleotide-sugar biosynthesis; CMP-3-deoxy-D-manno-octulosonate biosynthesis; CMP-3-deoxy-D-manno-octulosonate from 3-deoxy-D-manno-octulosonate and CTP: step 1/1. It functions in the pathway bacterial outer membrane biogenesis; lipopolysaccharide biosynthesis. Functionally, activates KDO (a required 8-carbon sugar) for incorporation into bacterial lipopolysaccharide in Gram-negative bacteria. This Actinobacillus succinogenes (strain ATCC 55618 / DSM 22257 / CCUG 43843 / 130Z) protein is 3-deoxy-manno-octulosonate cytidylyltransferase.